Consider the following 417-residue polypeptide: F-box protein At3g07870 (417 aa).

The region spanning 22-68 is the F-box domain; the sequence is GGGLESLPEDIIADIFSRLPISSIARLMFVCRSWRSVLTQHGRLSSS.

The protein is F-box protein At3g07870 of Arabidopsis thaliana (Mouse-ear cress).